The primary structure comprises 207 residues: MFFVTPAYAEEAPAAATGTDAHAAPAAGEVHTETGVAEGGHARGPFPPFDSTTYASQLLWLVITFGVFYLLMQKVIAPRIGAILDQRHTRLSQDVEEAGRLKAEADAAVRTYEGELAAARAKSNAIGSAARDAAKAKAEQDRRAVEATLSEKIKAAEVRIGEIKAKAFADVGAIAEETAAAVIDQLIGGTVAKADVAAAVAAAKKEV.

The chain crosses the membrane as a helical span at residues 58-78 (LLWLVITFGVFYLLMQKVIAP).

Belongs to the ATPase B chain family. In terms of assembly, F-type ATPases have 2 components, F(1) - the catalytic core - and F(0) - the membrane proton channel. F(1) has five subunits: alpha(3), beta(3), gamma(1), delta(1), epsilon(1). F(0) has three main subunits: a(1), b(2) and c(10-14). The alpha and beta chains form an alternating ring which encloses part of the gamma chain. F(1) is attached to F(0) by a central stalk formed by the gamma and epsilon chains, while a peripheral stalk is formed by the delta and b chains.

It localises to the cell inner membrane. Functionally, f(1)F(0) ATP synthase produces ATP from ADP in the presence of a proton or sodium gradient. F-type ATPases consist of two structural domains, F(1) containing the extramembraneous catalytic core and F(0) containing the membrane proton channel, linked together by a central stalk and a peripheral stalk. During catalysis, ATP synthesis in the catalytic domain of F(1) is coupled via a rotary mechanism of the central stalk subunits to proton translocation. Component of the F(0) channel, it forms part of the peripheral stalk, linking F(1) to F(0). The b'-subunit is a diverged and duplicated form of b found in plants and photosynthetic bacteria. This is ATP synthase subunit b 2 (atpF2) from Rhizobium johnstonii (strain DSM 114642 / LMG 32736 / 3841) (Rhizobium leguminosarum bv. viciae).